The sequence spans 133 residues: ATP synthase epsilon chain, chloroplastic (133 aa).

This sequence belongs to the ATPase epsilon chain family. In terms of assembly, F-type ATPases have 2 components, CF(1) - the catalytic core - and CF(0) - the membrane proton channel. CF(1) has five subunits: alpha(3), beta(3), gamma(1), delta(1), epsilon(1). CF(0) has three main subunits: a, b and c.

It is found in the plastid. The protein resides in the chloroplast thylakoid membrane. Its function is as follows. Produces ATP from ADP in the presence of a proton gradient across the membrane. This is ATP synthase epsilon chain, chloroplastic from Eucalyptus globulus subsp. globulus (Tasmanian blue gum).